Here is a 229-residue protein sequence, read N- to C-terminus: Molybdenum transport system permease protein ModB (229 aa).

The ABC transmembrane type-1 domain maps to 6 to 214 (INLSLSVAVS…LISLLLSEWL (209 aa)). The next 5 membrane-spanning stretches (helical) occupy residues 12 to 32 (VAVS…WLLA), 45 to 65 (VIHL…LVAM), 83 to 103 (FGFS…PLVV), 132 to 152 (FFTI…VLGF), and 196 to 216 (LCLF…WLSK).

This sequence belongs to the binding-protein-dependent transport system permease family. CysTW subfamily.

The protein localises to the cell inner membrane. Functionally, part of the binding-protein-dependent transport system for molybdenum; probably responsible for the translocation of the substrate across the membrane. This is Molybdenum transport system permease protein ModB (modB) from Haemophilus influenzae (strain ATCC 51907 / DSM 11121 / KW20 / Rd).